Reading from the N-terminus, the 194-residue chain is ATP-dependent Clp protease proteolytic subunit (194 aa).

Residue Ser99 is the Nucleophile of the active site. The active site involves His124.

This sequence belongs to the peptidase S14 family. In terms of assembly, fourteen ClpP subunits assemble into 2 heptameric rings which stack back to back to give a disk-like structure with a central cavity, resembling the structure of eukaryotic proteasomes.

The protein resides in the cytoplasm. The catalysed reaction is Hydrolysis of proteins to small peptides in the presence of ATP and magnesium. alpha-casein is the usual test substrate. In the absence of ATP, only oligopeptides shorter than five residues are hydrolyzed (such as succinyl-Leu-Tyr-|-NHMec, and Leu-Tyr-Leu-|-Tyr-Trp, in which cleavage of the -Tyr-|-Leu- and -Tyr-|-Trp bonds also occurs).. Its function is as follows. Cleaves peptides in various proteins in a process that requires ATP hydrolysis. Has a chymotrypsin-like activity. Plays a major role in the degradation of misfolded proteins. The protein is ATP-dependent Clp protease proteolytic subunit of Clostridium perfringens (strain ATCC 13124 / DSM 756 / JCM 1290 / NCIMB 6125 / NCTC 8237 / Type A).